The primary structure comprises 641 residues: Chaperone protein HtpG (641 aa).

Positions 1–351 are a; substrate-binding; that stretch reads MTQSVHAETH…SNDLPLNVSR (351 aa). The interval 352–568 is b; that stretch reads EILQDNKVTV…AHGMSTQMIK (217 aa). Positions 569–641 are c; that stretch reads LMRAAGQPVP…SRINRLLLQA (73 aa).

The protein belongs to the heat shock protein 90 family. As to quaternary structure, homodimer.

The protein localises to the cytoplasm. Functionally, molecular chaperone. Has ATPase activity. This chain is Chaperone protein HtpG, found in Aeromonas hydrophila subsp. hydrophila (strain ATCC 7966 / DSM 30187 / BCRC 13018 / CCUG 14551 / JCM 1027 / KCTC 2358 / NCIMB 9240 / NCTC 8049).